We begin with the raw amino-acid sequence, 1212 residues long: Solute carrier family 12 member 2 (1212 aa).

Methionine 1 is modified (N-acetylmethionine). Residues 1 to 286 lie on the Cytoplasmic side of the membrane; sequence MEPRPTAPSS…AESKGVVKFG (286 aa). Disordered regions lie at residues 36–81, 112–138, and 150–193; these read GTAV…QSRF, GAKQ…AKGR, and SSAE…GGGS. A phosphoserine mark is found at serine 77 and serine 79. Residues 80 to 83 carry the RFXV motif 1 motif; it reads RFQV. Residues 127 to 137 show a composition bias toward basic and acidic residues; that stretch reads EPAKGSEEAKG. The short motif at 138–141 is the RFXV motif 2 element; that stretch reads RFRV. Positions 150-160 are enriched in low complexity; sequence SSAEDSLSDAA. Residues threonine 203, threonine 207, and threonine 212 each carry the phosphothreonine; by OXSR1 and STK39 modification. A phosphothreonine mark is found at threonine 217 and threonine 230. Serine 242 carries the phosphoserine modification. Threonine 266 carries the post-translational modification Phosphothreonine. A discontinuously helical membrane pass occupies residues 287–316; that stretch reads WIKGVLVRCMLNIWGVMLFIRLSWIVGQAG. Leucine 297 is a binding site for Na(+). 2 residues coordinate K(+): asparagine 298 and isoleucine 299. Tryptophan 300 is a binding site for Na(+). 3 residues coordinate chloride: glycine 301, valine 302, and methionine 303. A helical transmembrane segment spans residues 317 to 336; the sequence is IGLSVLVIMMATVVTTITGL. Residues 337–367 lie on the Cytoplasmic side of the membrane; sequence STSAIATNGFVRGGGAYYLISRSLGPEFGGA. The chain crosses the membrane as a helical span at residues 368 to 395; that stretch reads IGLIFAFANAVAVAMYVVGFAETVVELL. Phenylalanine 372 is a binding site for chloride. Position 383 (tyrosine 383) interacts with K(+). Topologically, residues 396 to 405 are extracellular; it reads KEHSILMIDE. Residues 406–429 traverse the membrane as a helical segment; the sequence is INDIRIIGAITVVILLGISVAGME. The Cytoplasmic segment spans residues 430-432; it reads WEA. A helical transmembrane segment spans residues 433–454; that stretch reads KAQIVLLVILLLAIGDFVIGTF. At 455–486 the chain is on the extracellular side; it reads IPLESKKPKGFFGYKSEIFNENFGPDFREEET. The discontinuously helical transmembrane segment at 487–504 threads the bilayer; sequence FFSVFAIFFPAATGILAG. K(+) contacts are provided by proline 496, alanine 497, and threonine 499. Proline 496 and alanine 497 together coordinate chloride. The chloride site is built by glycine 500 and isoleucine 501. Residues 505 to 519 lie on the Cytoplasmic side of the membrane; it reads ANISGDLADPQSAIP. Residues 520-541 form a helical membrane-spanning segment; that stretch reads KGTLLAILITTLVYVGIAVSVG. The Extracellular portion of the chain corresponds to 542 to 598; it reads SCVVRDATGNVNDTIVTELTNCTSAACKLNFDFSSCESSPCSYGLMNNFQVMSMVSG. Residues asparagine 553 and asparagine 562 are each glycosylated (N-linked (GlcNAc...) asparagine). Disulfide bonds link cysteine 563/cysteine 568 and cysteine 577/cysteine 582. A helical transmembrane segment spans residues 599–623; sequence FTPLISAGIFSATLSSALASLVSAP. Alanine 610, serine 613, and serine 614 together coordinate Na(+). Over 624–651 the chain is Cytoplasmic; the sequence is KIFQALCKDNIYPAFQMFAKGYGKNNEP. The next 2 membrane-spanning stretches (helical) occupy residues 652–672 and 673–691; these read LRGY…AELN and VIAP…LINF. Chloride is bound by residues phenylalanine 682 and tyrosine 686. At 692–714 the chain is on the cytoplasmic side; that stretch reads SVFHASLAKSPGWRPAFKYYNMW. 2 helical membrane passes run 715–732 and 733–745; these read ISLL…VINW and WAAL…VLGL. The Cytoplasmic portion of the chain corresponds to 746–1212; it reads YIYVTYKKPD…NHQSVLTFYS (467 aa). The interval 761 to 778 is scissor helix; sequence STQALTYLNALQHSIRLS. 2 positions are modified to phosphoserine: serine 940 and serine 944. Positions 962–978 are enriched in basic and acidic residues; sequence LDTSKPLSEKPITHKVE. Positions 962–989 are disordered; the sequence is LDTSKPLSEKPITHKVEEEDGKTATQPL. The residue at position 994 (serine 994) is a Phosphoserine.

It belongs to the SLC12A transporter family. In terms of assembly, homodimer; adopts a domain-swap conformation at the scissor helices connecting the transmembrane domain and C-terminal domain. Post-translationally, phosphorylated at Thr-203, Thr-207 and Thr-212 by OXSR1/OSR1 and STK39/SPAK downstream of WNK kinases (WNK1, WNK2, WNK3 or WNK4), promoting its activity. Expressed in many tissues.

It is found in the basolateral cell membrane. The enzyme catalyses K(+)(out) + 2 chloride(out) + Na(+)(out) = K(+)(in) + 2 chloride(in) + Na(+)(in). Activated following phosphorylation by OXSR1/OSR1 and STK39/SPAK downstream of WNK kinases (WNK1, WNK2, WNK3 or WNK4). Inhibited by bumetanide. Inhibited by furosemide. Cation-chloride cotransporter which mediates the electroneutral transport of chloride, potassium and/or sodium ions across the membrane. Plays a vital role in the regulation of ionic balance and cell volume. The chain is Solute carrier family 12 member 2 (SLC12A2) from Homo sapiens (Human).